Reading from the N-terminus, the 435-residue chain is 3-phosphoshikimate 1-carboxyvinyltransferase (435 aa).

3-phosphoshikimate contacts are provided by K23, S24, and R28. K23 contacts phosphoenolpyruvate. The phosphoenolpyruvate site is built by G96 and R124. 3-phosphoshikimate contacts are provided by S167, S168, Q169, S196, E311, and H340. A phosphoenolpyruvate-binding site is contributed by Q169. The active-site Proton acceptor is E311. 3 residues coordinate phosphoenolpyruvate: R344, R385, and K410.

Belongs to the EPSP synthase family. Monomer.

It localises to the cytoplasm. It carries out the reaction 3-phosphoshikimate + phosphoenolpyruvate = 5-O-(1-carboxyvinyl)-3-phosphoshikimate + phosphate. Its pathway is metabolic intermediate biosynthesis; chorismate biosynthesis; chorismate from D-erythrose 4-phosphate and phosphoenolpyruvate: step 6/7. Catalyzes the transfer of the enolpyruvyl moiety of phosphoenolpyruvate (PEP) to the 5-hydroxyl of shikimate-3-phosphate (S3P) to produce enolpyruvyl shikimate-3-phosphate and inorganic phosphate. The chain is 3-phosphoshikimate 1-carboxyvinyltransferase from Mycolicibacterium paratuberculosis (strain ATCC BAA-968 / K-10) (Mycobacterium paratuberculosis).